The sequence spans 514 residues: Na(+)/H(+) antiporter NhaB (514 aa).

The next 12 helical transmembrane spans lie at Leu23–Ala43, Pro63–Ala83, Leu97–Phe117, Leu120–Phe140, Phe144–Ile164, Leu202–Pro222, Phe238–Met258, Ala303–Ile323, Leu357–Ile377, Leu391–Ile411, Ala447–Ile467, and Val475–Phe495.

The protein belongs to the NhaB Na(+)/H(+) (TC 2.A.34) antiporter family.

The protein resides in the cell inner membrane. It carries out the reaction 2 Na(+)(in) + 3 H(+)(out) = 2 Na(+)(out) + 3 H(+)(in). In terms of biological role, na(+)/H(+) antiporter that extrudes sodium in exchange for external protons. The sequence is that of Na(+)/H(+) antiporter NhaB from Salmonella gallinarum (strain 287/91 / NCTC 13346).